Consider the following 65-residue polypeptide: DNA-binding protein 7e (65 aa).

Lysine 7 bears the N6-methyllysine mark. Residues lysine 63 and lysine 64 each carry the N6-methyllysine; partial modification.

The protein belongs to the 7 kDa DNA-binding/endoribonuclease P2 family. Monomer. Post-translationally, lys-63 was found to be 25% monomethylated and Lys-64 was found to be 36% monomethylated.

The protein resides in the cytoplasm. Its function is as follows. Can constrain negative DNA supercoils. May be involved in maintaining the integrity of the genome at high temperature. This is DNA-binding protein 7e from Sulfolobus acidocaldarius (strain ATCC 33909 / DSM 639 / JCM 8929 / NBRC 15157 / NCIMB 11770).